The following is a 605-amino-acid chain: Probable potassium transport system protein Kup (605 aa).

Transmembrane regions (helical) follow at residues 17 to 37 (GLVF…IFAL), 45 to 65 (VFGI…VEYA), 96 to 116 (IAFV…DGVI), 140 to 160 (LGTL…FQFK), 165 to 185 (VAAA…VSGL), 211 to 231 (GISA…GEAL), 246 to 266 (AWYF…AFAL), 286 to 306 (LYIP…QALI), 338 to 358 (IYIG…MLIF), 367 to 387 (AYGL…TIIF), 394 to 414 (WKVP…ISNL), and 417 to 437 (LPHG…TILI).

This sequence belongs to the HAK/KUP transporter (TC 2.A.72) family.

The protein resides in the cell inner membrane. It catalyses the reaction K(+)(in) + H(+)(in) = K(+)(out) + H(+)(out). In terms of biological role, transport of potassium into the cell. Likely operates as a K(+):H(+) symporter. This chain is Probable potassium transport system protein Kup, found in Geotalea uraniireducens (strain Rf4) (Geobacter uraniireducens).